Consider the following 208-residue polypeptide: Flavin-dependent thymidylate synthase (208 aa).

The region spanning 1–208 (MEVICKHYTP…QYLFEDCLKH (208 aa)) is the ThyX domain. Residues Ser-50 and 74–76 (RHR) contribute to the FAD site. Residues 71–74 (ELSR), 84–86 (SSR), and Lys-147 contribute to the dUMP site. A ThyX motif motif is present at residues 74 to 84 (RHRIASLSVKS). FAD-binding positions include 163-165 (NAR) and Asn-169. Arg-174 contributes to the dUMP binding site. Arg-174 (involved in ionization of N3 of dUMP, leading to its activation) is an active-site residue.

It belongs to the thymidylate synthase ThyX family. In terms of assembly, homotetramer. FAD is required as a cofactor.

The catalysed reaction is dUMP + (6R)-5,10-methylene-5,6,7,8-tetrahydrofolate + NADPH + H(+) = dTMP + (6S)-5,6,7,8-tetrahydrofolate + NADP(+). It functions in the pathway pyrimidine metabolism; dTTP biosynthesis. Catalyzes the reductive methylation of 2'-deoxyuridine-5'-monophosphate (dUMP) to 2'-deoxythymidine-5'-monophosphate (dTMP) while utilizing 5,10-methylenetetrahydrofolate (mTHF) as the methyl donor, and NAD(P)H and FADH(2) as the reductant. This chain is Flavin-dependent thymidylate synthase, found in Helicobacter pylori (strain ATCC 700392 / 26695) (Campylobacter pylori).